The chain runs to 151 residues: UPF0208 membrane protein YPDSF_1972 (151 aa).

2 helical membrane passes run 46–66 (FGIR…IALG) and 69–89 (LGPA…GLWW).

This sequence belongs to the UPF0208 family.

It is found in the cell inner membrane. This Yersinia pestis (strain Pestoides F) protein is UPF0208 membrane protein YPDSF_1972.